Consider the following 207-residue polypeptide: MTELEYKQPLRIGVGGPVGSGKTALLEVLCKALRNKYQIAVVTNDIYTQEDAKILTRAEALDADRIIGVETGGCPHTAIREDASMNLAAVEELAKRHKNLDVVFVESGGDNLSATFSPELADLTIYVIDVAEGEKIPRKGGPGITRSDLLIINKIDLAPYVGASLVVMDQDTKRMRPEKPYIFTNMKTGKGVPEILTFIETAGMLNI.

16 to 23 (GPVGSGKT) serves as a coordination point for GTP.

The protein belongs to the SIMIBI class G3E GTPase family. UreG subfamily. In terms of assembly, homodimer. UreD, UreF and UreG form a complex that acts as a GTP-hydrolysis-dependent molecular chaperone, activating the urease apoprotein by helping to assemble the nickel containing metallocenter of UreC. The UreE protein probably delivers the nickel.

It is found in the cytoplasm. Its function is as follows. Facilitates the functional incorporation of the urease nickel metallocenter. This process requires GTP hydrolysis, probably effectuated by UreG. The sequence is that of Urease accessory protein UreG from Shewanella halifaxensis (strain HAW-EB4).